We begin with the raw amino-acid sequence, 155 residues long: UPF0305 protein MTH_811 (155 aa).

It belongs to the UPF0305 family.

The protein is UPF0305 protein MTH_811 of Methanothermobacter thermautotrophicus (strain ATCC 29096 / DSM 1053 / JCM 10044 / NBRC 100330 / Delta H) (Methanobacterium thermoautotrophicum).